Here is a 132-residue protein sequence, read N- to C-terminus: uncharacterized protein (132 aa).

Helical transmembrane passes span 6-26 (WIYAVFTILIIGLGLGSRAFS), 34-54 (NTYLGDSLWAAMIFTGCGFLF), 59-79 (TMITGIISLSFCFVIEFSQLY), and 106-126 (IEAYTIGIAACAAIELLVLGI).

It is found in the cell membrane. This is an uncharacterized protein from Bacillus subtilis (strain 168).